A 134-amino-acid polypeptide reads, in one-letter code: Cytochrome b5 isoform E (134 aa).

The region spanning 5-81 is the Cytochrome b5 heme-binding domain; the sequence is RKVLSFEEVS…MDKYFIGEID (77 aa). 2 residues coordinate heme: His40 and His64. The chain crosses the membrane as a helical span at residues 107 to 127; that stretch reads FIIKILQFLVPILILGLALVV. Positions 128–134 match the AKR2A-binding sequence (ABS) required for endoplasmic reticulum membrane targeting motif; the sequence is RHYTKKD.

Belongs to the cytochrome b5 family. As to quaternary structure, interacts with CER1, BI-1, FAH1 and FAH2. Interacts with AKR2A. As to expression, expressed in roots, stems, leaves, flowers and siliques.

It localises to the cell membrane. It is found in the endoplasmic reticulum membrane. Membrane bound hemoprotein which function as an electron carrier for several membrane bound oxygenases, including fatty acid desaturases. This chain is Cytochrome b5 isoform E (CYTB5-E), found in Arabidopsis thaliana (Mouse-ear cress).